The sequence spans 689 residues: DNA ligase (689 aa).

NAD(+) is bound by residues 51–55 (DSEYD), 100–101 (SL), and Glu-129. Catalysis depends on Lys-131, which acts as the N6-AMP-lysine intermediate. Residues Arg-152, Glu-189, Lys-308, and Lys-332 each contribute to the NAD(+) site. Residues Cys-426, Cys-429, Cys-444, and Cys-450 each contribute to the Zn(2+) site. A BRCT domain is found at 609 to 689 (ADEQPLKGQT…ELLALLAANR (81 aa)).

The protein belongs to the NAD-dependent DNA ligase family. LigA subfamily. It depends on Mg(2+) as a cofactor. Requires Mn(2+) as cofactor.

The catalysed reaction is NAD(+) + (deoxyribonucleotide)n-3'-hydroxyl + 5'-phospho-(deoxyribonucleotide)m = (deoxyribonucleotide)n+m + AMP + beta-nicotinamide D-nucleotide.. DNA ligase that catalyzes the formation of phosphodiester linkages between 5'-phosphoryl and 3'-hydroxyl groups in double-stranded DNA using NAD as a coenzyme and as the energy source for the reaction. It is essential for DNA replication and repair of damaged DNA. In Shewanella oneidensis (strain ATCC 700550 / JCM 31522 / CIP 106686 / LMG 19005 / NCIMB 14063 / MR-1), this protein is DNA ligase.